The sequence spans 568 residues: MSEIDTNDIKKEMDNKNYRDPTDNKELLKWTKKKRKRSNDSMHINNFYRYNPPNFKLLASKYPTFDKYIINKTEKIYNIDWKDSNATKELTRVLLDHDFGLRIELPDNYLCPTLTLRINYLYWISDQLKNLKIILNDNDNDNKIIKGIDIGTGTSCIFPLLGAKLFNNWSFIGIDIDDKVLEYAQNNITINSLNSKITLFKNEKNSDILLKLLNYKEGSNTFNSSNDDHQDNHDDDDDDEEYFADFCLCNPPFFKDLNENNNNKNNNPKSNCTGSVNEMVTDGGEFEFVKRIIKESFQLKCKIRFYTTMIGRKVNLNPLINILIKQYYLPKNQIQTTELVQGNTSRWVLSWYFLNKSTNLETKENNNINNNNNNNNNNNINNNNQFLTRMERRKLYREGITLNLDSDDNNNNNNNNNNNNNNNNNNNNNNNNNNNKIVEIIKLILDNNDIIYKTDENNIKYECKYLLNNVIVGSSIKLDRDIEFLFTIFIDLTTRLILFKPIDPKINNNNNNNNNNNNNNNNNNNNNNNNNNNNNKNNNNSCDGEIINSNLFFILKFLENIKNEIKLK.

Residues 1 to 20 (MSEIDTNDIKKEMDNKNYRD) are disordered. The segment covering 7-20 (NDIKKEMDNKNYRD) has biased composition (basic and acidic residues). S-adenosyl-L-methionine-binding residues include Arg-117, Gly-151, Asp-175, and Asn-250. Disordered stretches follow at residues 363 to 383 (KENN…INNN), 403 to 431 (NLDS…NNNN), and 503 to 538 (DPKI…NKNN). Low complexity-rich tracts occupy residues 365–383 (NNNI…INNN), 409–431 (NNNN…NNNN), and 507–538 (NNNN…NKNN).

Belongs to the methyltransferase superfamily. METTL16/RlmF family.

The catalysed reaction is adenosine in U6 snRNA + S-adenosyl-L-methionine = N(6)-methyladenosine in U6 snRNA + S-adenosyl-L-homocysteine + H(+). Functionally, RNA N6-methyltransferase that mediates N6-methylation of adenine of U6 small nuclear RNA (U6 snRNA). This chain is U6 small nuclear RNA (adenine-(43)-N(6))-methyltransferase, found in Dictyostelium discoideum (Social amoeba).